The chain runs to 331 residues: Protoheme IX farnesyltransferase (331 aa).

The next 8 helical transmembrane spans lie at 63-83, 109-129, 132-152, 160-180, 188-208, 215-235, 241-261, and 294-314; these read LACT…LNCL, SVFI…VSGV, LAAG…TAFL, IVFG…AAAG, WLFS…AILL, VGIP…AISV, VFLS…YGIL, and ILYM…VSIV.

It belongs to the UbiA prenyltransferase family. Protoheme IX farnesyltransferase subfamily.

It is found in the cell inner membrane. It carries out the reaction heme b + (2E,6E)-farnesyl diphosphate + H2O = Fe(II)-heme o + diphosphate. The protein operates within porphyrin-containing compound metabolism; heme O biosynthesis; heme O from protoheme: step 1/1. Functionally, converts heme B (protoheme IX) to heme O by substitution of the vinyl group on carbon 2 of heme B porphyrin ring with a hydroxyethyl farnesyl side group. In Prochlorococcus marinus (strain NATL1A), this protein is Protoheme IX farnesyltransferase.